A 315-amino-acid polypeptide reads, in one-letter code: MLEIEKPKIECVEASEDGTYGKFVIEPLERGYGITLGNSLRRILLSSLPGGAANSIKIDGVLHEFSTVTGVKEDVTELILNIKGLALKMNGEGPSTIYIDAQGPGEVTAADIISDGNVEIMNKDMHIATLDDDGKLYMEINVDNGRGYVTQNKNKKEDLPIGTIPVDSIYTPVKRVNFTVENTRVGQITDYDKLSIEVWTNGTIQPEEAISLSAKILIEHFKLFMTLTDHADNVEIMVEKEEDKKEKVLEMTIEELDLSVRSYNCLKRAGINTVQELTERTIDDMMKVRNLGKKSLEEVQEKLAALGLGLKKSDE.

Positions M1–T228 are alpha N-terminal domain (alpha-NTD). The segment at K245–E315 is alpha C-terminal domain (alpha-CTD).

Belongs to the RNA polymerase alpha chain family. In terms of assembly, homodimer. The RNAP catalytic core consists of 2 alpha, 1 beta, 1 beta' and 1 omega subunit. When a sigma factor is associated with the core the holoenzyme is formed, which can initiate transcription.

The catalysed reaction is RNA(n) + a ribonucleoside 5'-triphosphate = RNA(n+1) + diphosphate. DNA-dependent RNA polymerase catalyzes the transcription of DNA into RNA using the four ribonucleoside triphosphates as substrates. This Clostridium novyi (strain NT) protein is DNA-directed RNA polymerase subunit alpha.